A 600-amino-acid chain; its full sequence is MGGGYVLFGSARSGQMIMVALVLMVGSFYAGSIFGNNSPIYISQPSSSNSSSSSPSQSGPSNFANKIELTYRRTSVSIPESGVNVCPLKFNEYIPCHNVTYVQQLLPSLNLSRREELERHCPPLEQRLFCLVPPPKDYKIPIRWPTSRDYVWRSNVNHTHLAEVKGGQNWVHEQGQLWWFPGGGTHFKHGAPEYIQRLGNMTTNETGDLLSAGVEQVLDVGCGVASFAAYLLPLGIKTMSFAPKDGHENQIQFALERGIRAMISAIATKQMPYPAASFDMVHCSRCRVDWHENDGVLMKEVNRLLRPNGYFVYSAPPAYRKDKDFPVIWDKLVNLTSAMCWKLISRKVQTAIWVKEDDEACLRKNAELELITICGVEDVSKASWKVPLRDCVDISENRQQKPSSLTDRLSSYPTSLREKGISEDEFTLDTNFWREQVNQYWELMNVNKTEVRNVMDTNAFIGGFAAAMNSYPLWVMNVVPATMNDTLSGIYQRGLTGAYHDWCEPFSTYPRTYDLLHADHLFTHYKIYGEGCLLEDIMLEMDRIIRPQGFIIIRDEESIVSRVRDLAPKFLWEVEAHELQDKYKKTETVLFCRKKFWAIL.

Over 1 to 15 (MGGGYVLFGSARSGQ) the chain is Cytoplasmic. Residues 16–36 (MIMVALVLMVGSFYAGSIFGN) form a helical; Signal-anchor for type II membrane protein membrane-spanning segment. Residues 37–600 (NSPIYISQPS…FCRKKFWAIL (564 aa)) lie on the Lumenal side of the membrane. N-linked (GlcNAc...) asparagine glycans are attached at residues asparagine 49, asparagine 98, asparagine 110, asparagine 157, asparagine 200, asparagine 204, asparagine 334, asparagine 447, and asparagine 484.

This sequence belongs to the methyltransferase superfamily.

The protein localises to the golgi apparatus membrane. The protein is Probable methyltransferase PMT7 of Arabidopsis thaliana (Mouse-ear cress).